Here is a 181-residue protein sequence, read N- to C-terminus: NADH-quinone oxidoreductase subunit I (181 aa).

2 4Fe-4S ferredoxin-type domains span residues 52–81 (TRDS…LKKG) and 91–120 (KFFR…LTPD). [4Fe-4S] cluster is bound by residues C61, C64, C67, C71, C100, C103, C106, and C110.

It belongs to the complex I 23 kDa subunit family. In terms of assembly, NDH-1 is composed of 13 different subunits. Subunits NuoA, H, J, K, L, M, N constitute the membrane sector of the complex. Requires [4Fe-4S] cluster as cofactor.

It localises to the cell inner membrane. The enzyme catalyses a quinone + NADH + 5 H(+)(in) = a quinol + NAD(+) + 4 H(+)(out). In terms of biological role, NDH-1 shuttles electrons from NADH, via FMN and iron-sulfur (Fe-S) centers, to quinones in the respiratory chain. The immediate electron acceptor for the enzyme in this species is believed to be ubiquinone. Couples the redox reaction to proton translocation (for every two electrons transferred, four hydrogen ions are translocated across the cytoplasmic membrane), and thus conserves the redox energy in a proton gradient. This chain is NADH-quinone oxidoreductase subunit I, found in Blochmanniella pennsylvanica (strain BPEN).